The sequence spans 205 residues: Outer-membrane lipoprotein LolB (205 aa).

Residues 1–17 form the signal peptide; it reads MFLRHCITFTMIALLAG. Cys18 is lipidated: N-palmitoyl cysteine. Cys18 carries S-diacylglycerol cysteine lipidation.

The protein belongs to the LolB family. As to quaternary structure, monomer.

Its subcellular location is the cell outer membrane. In terms of biological role, plays a critical role in the incorporation of lipoproteins in the outer membrane after they are released by the LolA protein. The sequence is that of Outer-membrane lipoprotein LolB from Pseudomonas putida (strain ATCC 700007 / DSM 6899 / JCM 31910 / BCRC 17059 / LMG 24140 / F1).